The chain runs to 292 residues: Cytochrome c1, heme protein, mitochondrial (292 aa).

A mitochondrion-targeting transit peptide spans 1–46 (MFRSFSTAAKQAVKGTYVQRAIVGGAAVVGIGASTMLYADSLTADA). At 47–253 (MTAAEHGLHA…SEPEHDERKR (207 aa)) the chain is on the mitochondrial intermembrane side. The Cytochrome c domain occupies 73–226 (SSIRRGYQVY…DLVEYEDGTP (154 aa)). Residues Cys86, Cys89, and His90 each coordinate heme c. The disordered stretch occupies residues 117–137 (FEYDDEPDDQGNPKKRPGKLA). Position 210 (Met210) interacts with heme c. The helical transmembrane segment at 254–272 (LGLKAMIVLSSLYLLSVWV) threads the bilayer. Residues 273–292 (KKFKWASIKSRKIVFNPPKK) are Mitochondrial matrix-facing.

The protein belongs to the cytochrome c family. Component of the ubiquinol-cytochrome c oxidoreductase (cytochrome b-c1 complex, complex III, CIII), a multisubunit enzyme composed of 3 respiratory subunits cytochrome b, cytochrome c1 and Rieske protein, 2 core protein subunits, and additional low-molecular weight protein subunits. The complex exists as an obligatory dimer and forms supercomplexes (SCs) in the inner mitochondrial membrane with cytochrome c oxidase (complex IV, CIV). Heme c is required as a cofactor.

Its subcellular location is the mitochondrion inner membrane. The catalysed reaction is a quinol + 2 Fe(III)-[cytochrome c](out) = a quinone + 2 Fe(II)-[cytochrome c](out) + 2 H(+)(out). In terms of biological role, component of the ubiquinol-cytochrome c oxidoreductase, a multisubunit transmembrane complex that is part of the mitochondrial electron transport chain which drives oxidative phosphorylation. The respiratory chain contains 3 multisubunit complexes succinate dehydrogenase (complex II, CII), ubiquinol-cytochrome c oxidoreductase (cytochrome b-c1 complex, complex III, CIII) and cytochrome c oxidase (complex IV, CIV), that cooperate to transfer electrons derived from NADH and succinate to molecular oxygen, creating an electrochemical gradient over the inner membrane that drives transmembrane transport and the ATP synthase. The cytochrome b-c1 complex catalyzes electron transfer from ubiquinol to cytochrome c, linking this redox reaction to translocation of protons across the mitochondrial inner membrane, with protons being carried across the membrane as hydrogens on the quinol. In the process called Q cycle, 2 protons are consumed from the matrix, 4 protons are released into the intermembrane space and 2 electrons are passed to cytochrome c. Cytochrome c1 is a catalytic core subunit containing a c-type heme. It transfers electrons from the [2Fe-2S] iron-sulfur cluster of the Rieske protein to cytochrome c. The chain is Cytochrome c1, heme protein, mitochondrial (CYT1) from Kluyveromyces lactis (strain ATCC 8585 / CBS 2359 / DSM 70799 / NBRC 1267 / NRRL Y-1140 / WM37) (Yeast).